The sequence spans 312 residues: Pyridoxal 5'-phosphate synthase subunit PDX1 (312 aa).

Residue Asp-43 participates in D-ribose 5-phosphate binding. Residue Lys-100 is the Schiff-base intermediate with D-ribose 5-phosphate of the active site. Gly-172 is a D-ribose 5-phosphate binding site. Arg-184 is a binding site for D-glyceraldehyde 3-phosphate. Residues Gly-233 and 254–255 contribute to the D-ribose 5-phosphate site; that span reads GS.

The protein belongs to the PdxS/SNZ family.

The catalysed reaction is aldehydo-D-ribose 5-phosphate + D-glyceraldehyde 3-phosphate + L-glutamine = pyridoxal 5'-phosphate + L-glutamate + phosphate + 3 H2O + H(+). It participates in cofactor biosynthesis; pyridoxal 5'-phosphate biosynthesis. Functionally, catalyzes the formation of pyridoxal 5'-phosphate from ribose 5-phosphate (RBP), glyceraldehyde 3-phosphate (G3P) and ammonia. The ammonia is provided by PDX2. Can also use ribulose 5-phosphate and dihydroxyacetone phosphate as substrates, resulting from enzyme-catalyzed isomerization of RBP and G3P, respectively. Also plays an indirect role in resistance to singlet oxygen-generating photosensitizers. The protein is Pyridoxal 5'-phosphate synthase subunit PDX1 (PDX1) of Phaseolus vulgaris (Kidney bean).